The primary structure comprises 105 residues: Met repressor (105 aa).

This sequence belongs to the MetJ family. Homodimer.

The protein localises to the cytoplasm. Its function is as follows. This regulatory protein, when combined with SAM (S-adenosylmethionine) represses the expression of the methionine regulon and of enzymes involved in SAM synthesis. The polypeptide is Met repressor (Haemophilus influenzae (strain 86-028NP)).